A 391-amino-acid chain; its full sequence is Succinate--CoA ligase [ADP-forming] subunit beta (391 aa).

In terms of domain architecture, ATP-grasp spans 9–248 (KDILRKFGVA…ITEEDPFEVE (240 aa)). Residues lysine 50, 57–59 (GRG), glutamate 103, methionine 106, and glutamate 111 each bind ATP. Residues asparagine 203 and aspartate 217 each contribute to the Mg(2+) site. Substrate-binding positions include asparagine 268 and 325–327 (GIV).

This sequence belongs to the succinate/malate CoA ligase beta subunit family. Heterotetramer of two alpha and two beta subunits. Requires Mg(2+) as cofactor.

The enzyme catalyses succinate + ATP + CoA = succinyl-CoA + ADP + phosphate. The catalysed reaction is GTP + succinate + CoA = succinyl-CoA + GDP + phosphate. It participates in carbohydrate metabolism; tricarboxylic acid cycle; succinate from succinyl-CoA (ligase route): step 1/1. Functionally, succinyl-CoA synthetase functions in the citric acid cycle (TCA), coupling the hydrolysis of succinyl-CoA to the synthesis of either ATP or GTP and thus represents the only step of substrate-level phosphorylation in the TCA. The beta subunit provides nucleotide specificity of the enzyme and binds the substrate succinate, while the binding sites for coenzyme A and phosphate are found in the alpha subunit. This Chlorobium phaeovibrioides (strain DSM 265 / 1930) (Prosthecochloris vibrioformis (strain DSM 265)) protein is Succinate--CoA ligase [ADP-forming] subunit beta.